We begin with the raw amino-acid sequence, 127 residues long: MRHYEIVILVHPDQSSQVPAMVERYQSMIKEKDGKVHRLEDWGRRQLAYSIDKVHKAHYLLMNIESDQGVISELENAFRYNDAVIRSLILKRDHAITKSSLIMQGAEKGKSSRKEKVAAEAEASEEA.

Residues 104-127 (QGAEKGKSSRKEKVAAEAEASEEA) form a disordered region. Residues 107–119 (EKGKSSRKEKVAA) are compositionally biased toward basic and acidic residues.

Belongs to the bacterial ribosomal protein bS6 family.

In terms of biological role, binds together with bS18 to 16S ribosomal RNA. The chain is Small ribosomal subunit protein bS6 from Coxiella burnetii (strain CbuG_Q212) (Coxiella burnetii (strain Q212)).